A 448-amino-acid polypeptide reads, in one-letter code: MAAQASEKLEKLDLNGQNGESAAGPAKAGQADAGEVEDESDDDADDAGAAADGAANGAAKKKKKRKSKKKKKGGAKVQSSPPRVPVSSLFANGQYPEGEIVEYKNENSYRTTNEEKRYLDRMNNDFLQEYRQGAEVHRQVRQYAQKNIKPGQTLTEIAEGIEDSVRALTGHQGLEEGDNIKGGMGFPCGLSINHCAAHYTPNAGNKMVLQQGDVMKVDFGAHINGRIVDSAFTMSFDPVYDPLLEAVKDATNTGIRSLQEAGIDVRMSDIGAAIQETMESYEIELNGTTYPIKPIRNLNGHNIDQHVIHGGKSVPIVKGSDQTKMEEGEVFAIETFGSTGKGYVREDMETSHYALVANAPQVPLRLSSAKSLLNVINKNFGTLPWCRRYLDRLGQDKYLLGLNNLVQSGIVQDYPPLCDIKGSYTAQFEHTIVLRPTVKEVISRGDDY.

Residues 1 to 90 (MAAQASEKLE…PPRVPVSSLF (90 aa)) are disordered. Positions 22-33 (AAGPAKAGQADA) are enriched in low complexity. The span at 34–46 (GEVEDESDDDADD) shows a compositional bias: acidic residues. Residues 47–58 (AGAAADGAANGA) are compositionally biased toward low complexity. Residues 59 to 74 (AKKKKKRKSKKKKKGG) are compositionally biased toward basic residues. Positions 75–88 (AKVQSSPPRVPVSS) are enriched in low complexity. Histidine 198 serves as a coordination point for substrate. A divalent metal cation-binding residues include aspartate 218, aspartate 229, and histidine 301. Residue histidine 309 coordinates substrate. Positions 334 and 429 each coordinate a divalent metal cation.

Belongs to the peptidase M24A family. Methionine aminopeptidase eukaryotic type 2 subfamily. Co(2+) is required as a cofactor. It depends on Zn(2+) as a cofactor. Mn(2+) serves as cofactor. The cofactor is Fe(2+).

It localises to the cytoplasm. The enzyme catalyses Release of N-terminal amino acids, preferentially methionine, from peptides and arylamides.. Cotranslationally removes the N-terminal methionine from nascent proteins. The N-terminal methionine is often cleaved when the second residue in the primary sequence is small and uncharged (Met-Ala-, Cys, Gly, Pro, Ser, Thr, or Val). This Emericella nidulans (strain FGSC A4 / ATCC 38163 / CBS 112.46 / NRRL 194 / M139) (Aspergillus nidulans) protein is Methionine aminopeptidase 2-1.